A 359-amino-acid polypeptide reads, in one-letter code: Hsp70-binding protein 1 (359 aa).

A disordered region spans residues 1–71 (MSDEGSRGSR…PPPEPMSEER (71 aa)). Residues 23 to 37 (SSGGGGGGSSAGGSG) show a composition bias toward gly residues. ARM repeat units lie at residues 132–174 (ENMD…TCSQ), 177–217 (AAIQ…CLVR), 220–259 (EAGL…NLLV), and 262–301 (PEHK…SLVT). Phosphoserine occurs at positions 351 and 356.

Interacts with the ATP-binding domain of HSPA1A. Detected in a ternary complex containing STUB1, HSPA1A and HSPBP1. Interacts with PGLYRP1; this interaction blocks the cytotoxic activity of the PGLYRP1-HSPA1A complex. Ubiquitous.

Functionally, inhibits HSPA1A chaperone activity by changing the conformation of the ATP-binding domain of HSPA1A and interfering with ATP binding. Interferes with ubiquitination mediated by STUB1 and inhibits chaperone-assisted degradation of immature CFTR. This Homo sapiens (Human) protein is Hsp70-binding protein 1.